The sequence spans 331 residues: Probable 5-dehydro-4-deoxyglucarate dehydratase 2 (331 aa).

The tract at residues 1-23 (MSADTDTDTDTGTGTGPDTDTGT) is disordered. Residues 10 to 23 (DTGTGTGPDTDTGT) show a composition bias toward low complexity.

Belongs to the DapA family.

It catalyses the reaction 5-dehydro-4-deoxy-D-glucarate + H(+) = 2,5-dioxopentanoate + CO2 + H2O. Its pathway is carbohydrate acid metabolism; D-glucarate degradation; 2,5-dioxopentanoate from D-glucarate: step 2/2. This chain is Probable 5-dehydro-4-deoxyglucarate dehydratase 2, found in Streptomyces avermitilis (strain ATCC 31267 / DSM 46492 / JCM 5070 / NBRC 14893 / NCIMB 12804 / NRRL 8165 / MA-4680).